Here is a 324-residue protein sequence, read N- to C-terminus: ATP-dependent 6-phosphofructokinase (324 aa).

Residue Gly15 participates in ATP binding. Residue 25–29 (RGVVR) participates in ADP binding. ATP is bound by residues 76 to 77 (RF) and 106 to 109 (GDGS). Residue Asp107 participates in Mg(2+) binding. 130-132 (TID) provides a ligand contact to substrate. Asp132 (proton acceptor) is an active-site residue. ADP is bound at residue Arg159. Substrate contacts are provided by residues Arg167 and 174–176 (MGR). Residues 190–192 (GCE), Lys216, and 218–220 (KRH) contribute to the ADP site. Substrate contacts are provided by residues Glu227, Arg248, and 254-257 (HIQR).

This sequence belongs to the phosphofructokinase type A (PFKA) family. ATP-dependent PFK group I subfamily. Prokaryotic clade 'B1' sub-subfamily. In terms of assembly, homotetramer. Mg(2+) serves as cofactor.

The protein resides in the cytoplasm. The catalysed reaction is beta-D-fructose 6-phosphate + ATP = beta-D-fructose 1,6-bisphosphate + ADP + H(+). The protein operates within carbohydrate degradation; glycolysis; D-glyceraldehyde 3-phosphate and glycerone phosphate from D-glucose: step 3/4. Its activity is regulated as follows. Allosterically activated by ADP and other diphosphonucleosides, and allosterically inhibited by phosphoenolpyruvate. In terms of biological role, catalyzes the phosphorylation of D-fructose 6-phosphate to fructose 1,6-bisphosphate by ATP, the first committing step of glycolysis. The chain is ATP-dependent 6-phosphofructokinase from Actinobacillus pleuropneumoniae serotype 5b (strain L20).